The primary structure comprises 237 residues: Phosphoribosylaminoimidazole-succinocarboxamide synthase (237 aa).

Belongs to the SAICAR synthetase family.

The enzyme catalyses 5-amino-1-(5-phospho-D-ribosyl)imidazole-4-carboxylate + L-aspartate + ATP = (2S)-2-[5-amino-1-(5-phospho-beta-D-ribosyl)imidazole-4-carboxamido]succinate + ADP + phosphate + 2 H(+). The protein operates within purine metabolism; IMP biosynthesis via de novo pathway; 5-amino-1-(5-phospho-D-ribosyl)imidazole-4-carboxamide from 5-amino-1-(5-phospho-D-ribosyl)imidazole-4-carboxylate: step 1/2. The sequence is that of Phosphoribosylaminoimidazole-succinocarboxamide synthase from Cronobacter sakazakii (strain ATCC BAA-894) (Enterobacter sakazakii).